The primary structure comprises 82 residues: Cytochrome b559 subunit alpha (82 aa).

Residues 22-36 (VIHAVTLPSIFLAGY) form a helical membrane-spanning segment. Residue His24 coordinates heme.

This sequence belongs to the PsbE/PsbF family. In terms of assembly, heterodimer of an alpha subunit and a beta subunit. PSII is composed of 1 copy each of membrane proteins PsbA, PsbB, PsbC, PsbD, PsbE, PsbF, PsbH, PsbI, PsbJ, PsbK, PsbL, PsbM, PsbT, PsbX, PsbY, Psb30/Ycf12, peripheral proteins PsbO, CyanoQ (PsbQ), PsbU, PsbV and a large number of cofactors. It forms dimeric complexes. It depends on heme b as a cofactor.

It localises to the cellular thylakoid membrane. In terms of biological role, this b-type cytochrome is tightly associated with the reaction center of photosystem II (PSII). PSII is a light-driven water:plastoquinone oxidoreductase that uses light energy to abstract electrons from H(2)O, generating O(2) and a proton gradient subsequently used for ATP formation. It consists of a core antenna complex that captures photons, and an electron transfer chain that converts photonic excitation into a charge separation. The protein is Cytochrome b559 subunit alpha of Prochlorococcus marinus (strain MIT 9303).